The chain runs to 224 residues: C-&gt;U-editing enzyme APOBEC-2 (224 aa).

Residues 1–24 form a disordered region; that stretch reads MAQKEEAAVATEAASQNGEDLENL. Zn(2+) is bound by residues Glu60 and His98. The 106-residue stretch at 64–169 folds into the CMP/dCMP-type deaminase domain; that stretch reads GRNKTFLCYV…PEIQAALKKL (106 aa). Glu100 acts as the Proton donor in catalysis. Positions 128 and 131 each coordinate Zn(2+).

This sequence belongs to the cytidine and deoxycytidylate deaminase family. Homotetramer. Requires Zn(2+) as cofactor. As to expression, expressed exclusively in heart and skeletal muscle.

It carries out the reaction cytidine(6666) in apoB mRNA + H2O + H(+) = uridine(6666) in apoB mRNA + NH4(+). Probable C to U editing enzyme whose physiological substrate is not yet known. Does not display detectable apoB mRNA editing. Has a low intrinsic cytidine deaminase activity. May play a role in the epigenetic regulation of gene expression through the process of active DNA demethylation. This is C-&gt;U-editing enzyme APOBEC-2 (APOBEC2) from Homo sapiens (Human).